The primary structure comprises 1101 residues: Isoleucine--tRNA ligase (1101 aa).

Residues 50 to 60 (PFANGLPHYGH) carry the 'HIGH' region motif. The short motif at 629–633 (KLSKR) is the 'KMSKS' region element. Position 632 (Lys-632) interacts with ATP.

The protein belongs to the class-I aminoacyl-tRNA synthetase family. IleS type 2 subfamily. In terms of assembly, monomer. Zn(2+) is required as a cofactor.

It localises to the cytoplasm. The enzyme catalyses tRNA(Ile) + L-isoleucine + ATP = L-isoleucyl-tRNA(Ile) + AMP + diphosphate. Functionally, catalyzes the attachment of isoleucine to tRNA(Ile). As IleRS can inadvertently accommodate and process structurally similar amino acids such as valine, to avoid such errors it has two additional distinct tRNA(Ile)-dependent editing activities. One activity is designated as 'pretransfer' editing and involves the hydrolysis of activated Val-AMP. The other activity is designated 'posttransfer' editing and involves deacylation of mischarged Val-tRNA(Ile). In Anaplasma marginale (strain St. Maries), this protein is Isoleucine--tRNA ligase.